A 172-amino-acid polypeptide reads, in one-letter code: Cytidylate kinase (172 aa).

4 to 12 (GPPGSGKST) contacts ATP.

This sequence belongs to the cytidylate kinase family. Type 2 subfamily.

The protein resides in the cytoplasm. The enzyme catalyses CMP + ATP = CDP + ADP. It carries out the reaction dCMP + ATP = dCDP + ADP. This is Cytidylate kinase (cmk) from Aeropyrum pernix (strain ATCC 700893 / DSM 11879 / JCM 9820 / NBRC 100138 / K1).